The following is a 278-amino-acid chain: MPIKSFKPVTPSRRNMTSLDYSVLTTDRPEKSLIKTRKKHAGRNNQGVITTRHKGGGHKVKYRIIDFKRNKDNIIGKIATIEYDPNRNAFICLVNYVDGEKRYILAPKTIKVGMQIVSAEKTDIKVGNCMKLKNIPEGTVLHNLELRPGKGGQLARSAGSSVQFLGKDEDGKYVTIRLTSGEVRKVLGECRATVGEVGNEDYALVNWGKAGRNRWRGIRPTVRGSAMNPNDHPHGGGEGKAPVGRKAPMTPWGKKALGVKTRNKKKASTKLIVRRRTK.

A disordered region spans residues arginine 223–lysine 278. A compositionally biased stretch (basic residues) spans threonine 261–lysine 278.

The protein belongs to the universal ribosomal protein uL2 family. As to quaternary structure, part of the 50S ribosomal subunit. Forms a bridge to the 30S subunit in the 70S ribosome.

In terms of biological role, one of the primary rRNA binding proteins. Required for association of the 30S and 50S subunits to form the 70S ribosome, for tRNA binding and peptide bond formation. It has been suggested to have peptidyltransferase activity; this is somewhat controversial. Makes several contacts with the 16S rRNA in the 70S ribosome. The chain is Large ribosomal subunit protein uL2 from Spiroplasma kunkelii.